The chain runs to 314 residues: MVQQRGARAKRDGGPPPPGPGPAAEGAREPGWCKTPSGHIKRPMNAFMVWSQHERRKIMDQWPDMHNAEISKRLGRRWQLLQDSEKIPFVREAERLRLKHMADYPDYKYRPRKKSKGAPAKARPRPPGGGGGGSRLKPGPQLPGRGGRRASGGPLGGGAAAPEDDDEDEEEELLEVRLLETPGRELWRMVPAGRAARGPAERAQGPSGEGAAASAASPTLSEDEEPEEEEEEAATAEEGEEETVVSGEEPLGFLSRMPPGPAGLDCSALDRDPDLLPPSGTSHFEFPDYCTPEVTEMIAGDWRSSSIADLVFTY.

Disordered regions lie at residues 1–40 (MVQQ…SGHI) and 101–287 (MADY…FEFP). Residues 40–108 (IKRPMNAFMV…KHMADYPDYK (69 aa)) constitute a DNA-binding region (HMG box). Positions 149-159 (RASGGPLGGGA) are enriched in gly residues. Residues 162-173 (PEDDDEDEEEEL) show a composition bias toward acidic residues. Over residues 174-187 (LEVRLLETPGRELW) the composition is skewed to basic and acidic residues. Over residues 191–217 (PAGRAARGPAERAQGPSGEGAAASAAS) the composition is skewed to low complexity. Over residues 221–243 (SEDEEPEEEEEEAATAEEGEEET) the composition is skewed to acidic residues. A required for transcriptional activation activity and synergistic coactivation of transcriptional activity with POU3F2 region spans residues 282–314 (SHFEFPDYCTPEVTEMIAGDWRSSSIADLVFTY).

In terms of tissue distribution, expressed in splenic and thymic regulatory T-cells (at protein level). Expressed in embryonic molar and incisor teeth.

It is found in the nucleus. Its function is as follows. Transcription factor that binds to DNA at the consensus sequence 5'-ACCAAAG-3'. Acts as a transcriptional activator. Binds cooperatively with POU3F2/BRN2 or POU3F1/OCT6 to gene promoters, which enhances transcriptional activation. Involved in the differentiation of naive CD4-positive T-cells into peripherally induced regulatory T (pT reg) cells under inflammatory conditions. Binds to the promoter region of the FOXP3 gene and promotes its transcription, and might thereby contribute to pT reg cell differentiation in the spleen and lymph nodes during inflammation. Plays a redundant role with SOX4 and SOX11 in cell survival of developing tissues such as the neural tube, branchial arches and somites, thereby contributing to organogenesis. In Mus musculus (Mouse), this protein is Transcription factor SOX-12 (Sox12).